Consider the following 585-residue polypeptide: Arginine--tRNA ligase (585 aa).

The short motif at 131–141 is the 'HIGH' region element; it reads ANPTGPMHVGH.

This sequence belongs to the class-I aminoacyl-tRNA synthetase family. In terms of assembly, monomer.

It is found in the cytoplasm. It catalyses the reaction tRNA(Arg) + L-arginine + ATP = L-arginyl-tRNA(Arg) + AMP + diphosphate. In Bartonella bacilliformis (strain ATCC 35685 / KC583 / Herrer 020/F12,63), this protein is Arginine--tRNA ligase.